The following is a 699-amino-acid chain: Elongation factor G (699 aa).

The tr-type G domain occupies 8–283 (EHIRNIGICA…AVVDFLPSPI (276 aa)). GTP is bound by residues 17 to 24 (AHIDAGKT), 81 to 85 (DTPGH), and 135 to 138 (NKMD).

This sequence belongs to the TRAFAC class translation factor GTPase superfamily. Classic translation factor GTPase family. EF-G/EF-2 subfamily.

It localises to the cytoplasm. Its function is as follows. Catalyzes the GTP-dependent ribosomal translocation step during translation elongation. During this step, the ribosome changes from the pre-translocational (PRE) to the post-translocational (POST) state as the newly formed A-site-bound peptidyl-tRNA and P-site-bound deacylated tRNA move to the P and E sites, respectively. Catalyzes the coordinated movement of the two tRNA molecules, the mRNA and conformational changes in the ribosome. The polypeptide is Elongation factor G (Rickettsia sibirica (strain ATCC VR-151 / 246)).